The primary structure comprises 255 residues: 4-diphosphocytidyl-2-C-methyl-D-erythritol kinase (255 aa).

The active site involves lysine 6. 95–105 is a binding site for ATP; sequence PVCAGLGGGSS. Residue aspartate 137 is part of the active site.

The protein belongs to the GHMP kinase family. IspE subfamily.

It catalyses the reaction 4-CDP-2-C-methyl-D-erythritol + ATP = 4-CDP-2-C-methyl-D-erythritol 2-phosphate + ADP + H(+). It functions in the pathway isoprenoid biosynthesis; isopentenyl diphosphate biosynthesis via DXP pathway; isopentenyl diphosphate from 1-deoxy-D-xylulose 5-phosphate: step 3/6. In terms of biological role, catalyzes the phosphorylation of the position 2 hydroxy group of 4-diphosphocytidyl-2C-methyl-D-erythritol. In Campylobacter jejuni subsp. jejuni serotype O:2 (strain ATCC 700819 / NCTC 11168), this protein is 4-diphosphocytidyl-2-C-methyl-D-erythritol kinase.